We begin with the raw amino-acid sequence, 179 residues long: Shikimate kinase (179 aa).

22–27 (GTGKSS) contributes to the ATP binding site. Ser26 serves as a coordination point for Mg(2+). 3 residues coordinate substrate: Asp44, Arg68, and Gly90. An ATP-binding site is contributed by Arg128. Arg147 serves as a coordination point for substrate.

The protein belongs to the shikimate kinase family. In terms of assembly, monomer. Mg(2+) serves as cofactor.

The protein localises to the cytoplasm. It carries out the reaction shikimate + ATP = 3-phosphoshikimate + ADP + H(+). It participates in metabolic intermediate biosynthesis; chorismate biosynthesis; chorismate from D-erythrose 4-phosphate and phosphoenolpyruvate: step 5/7. Its function is as follows. Catalyzes the specific phosphorylation of the 3-hydroxyl group of shikimic acid using ATP as a cosubstrate. The chain is Shikimate kinase from Geobacter metallireducens (strain ATCC 53774 / DSM 7210 / GS-15).